We begin with the raw amino-acid sequence, 420 residues long: Uteroferrin-associated basic protein 2 (420 aa).

The N-terminal stretch at methionine 1–cysteine 25 is a signal peptide. N-linked (GlcNAc...) asparagine glycosylation is found at asparagine 225, asparagine 271, and asparagine 343.

The protein belongs to the serpin family. UTMP subfamily.

Its subcellular location is the secreted. The protein resides in the extracellular space. In Sus scrofa (Pig), this protein is Uteroferrin-associated basic protein 2.